The primary structure comprises 245 residues: MAGHSKWKNIQRRKNAQDAKRGKLFMKLAKEIYVAAKMGGGDPTTNATLRLAIEKAKSANMPNENIERAIKKATGNQEHTHYEEIRYEGYGPGGVAVMVICLTDNKNRTASNVRVAFSKNGGNLGETGCVSYLFDRKGLIVIARENLHIDEDDMLLQAIEAGADEMETTEDSFEIYTSPEQFEQVKNTLAAQGFTFATAEITMIPQTYTTLTGDDLTKMLKLIDMLEDDDDVQEIYHNLDESMLE.

Over residues 1–14 the composition is skewed to basic residues; sequence MAGHSKWKNIQRRK. A disordered region spans residues 1–21; the sequence is MAGHSKWKNIQRRKNAQDAKR.

Belongs to the TACO1 family.

It localises to the cytoplasm. This Anoxybacillus flavithermus (strain DSM 21510 / WK1) protein is Probable transcriptional regulatory protein Aflv_0709.